The sequence spans 577 residues: Serine/threonine-protein kinase AGC1-5 (577 aa).

Residues 1-12 (MDLASKKNTANV) show a composition bias toward polar residues. The interval 1–151 (MDLASKKNTA…DYAYGDNLVG (151 aa)) is disordered. Residues 44–55 (PHFDPKKMDPLV) are compositionally biased toward basic and acidic residues. 2 stretches are compositionally biased toward polar residues: residues 69–87 (TRGT…SSDG) and 110–120 (LTTSETYSPSA). One can recognise a Protein kinase domain in the interval 185–509 (FRLLKRLGYG…ATEIKQHPFF (325 aa)). Residues 191-199 (LGYGDIGSV) and K214 each bind ATP. D310 (proton acceptor) is an active-site residue. The 68-residue stretch at 510–577 (EGVNWALVRS…DTAYIDFEYF (68 aa)) folds into the AGC-kinase C-terminal domain.

It belongs to the protein kinase superfamily. AGC Ser/Thr protein kinase family. Interacts with PDPK1/PDK1. In terms of processing, autophosphorylated and phosphorylated by PDPK1/PDK1. Specifically expressed in pollen grains.

The enzyme catalyses L-seryl-[protein] + ATP = O-phospho-L-seryl-[protein] + ADP + H(+). It catalyses the reaction L-threonyl-[protein] + ATP = O-phospho-L-threonyl-[protein] + ADP + H(+). Activated by PDPK1/PDK1. Functions redudantly with AGC1-7 as signaling component in the pollen tube. Required for polarized growth of pollen tubes. The chain is Serine/threonine-protein kinase AGC1-5 from Arabidopsis thaliana (Mouse-ear cress).